The following is a 565-amino-acid chain: MEDSDSAAKQLGLAEAAAVAAAAAVAAAAAAAAGGEAEEPVLSRDEDSEEDADSEAERETPRVTAVAVMAAEPGHMDMGAEALPGPDEAAAAAAFAEVTTVTVANVGAAADNVFTTSVANAASISGHVLSGRTALQIGDSLNTEKATLIVVHTDGSIVETTGLKGPAAPLTPGPQSPPTPLAPGQEKGGTKYNWDPSVYDSELPVRCRNISGTLYKNRLGSGGRGRCIKQGENWYSPTEFEAMAGRASSKDWKRSIRYAGRPLQCLIQDGILNPHAASCTCAACCDDMTLSGPVRLFVPYKRRKKENELPTTPVKKDSPKNITLLPATAATTFTVTPSGQITTSGALTFDRASTVEATAVISESPAQGDVFAGATVQEASVQPPCRASHPEPHYPGYQDSCQIAPFPEAALPTSHPKIVLTSLPALAVPPPTPTKAAPPALVNGLELSEPRSWLYLEEMVNSLLNTAQQLKTLFEQAKHASTYREAATNQAKIHADAERKEQSCVNCGREAMSECTGCHKVNYCSTFCQRKDWKDHQHICGQSAAVTVQADEVHVAESVMEKVTV.

Disordered stretches follow at residues 34–62 (GGEA…ETPR) and 162–190 (GLKG…KGGT). Residues 169–181 (PLTPGPQSPPTPL) show a composition bias toward pro residues. Phosphothreonine is present on T171. S176 is subject to Phosphoserine. T179 is subject to Phosphothreonine. One can recognise an SAND domain in the interval 193–273 (NWDPSVYDSE…QCLIQDGILN (81 aa)). The short motif at 301–316 (KRRKKENELPTTPVKK) is the Nuclear localization signal element. An interaction with LMO4 region spans residues 403–478 (IAPFPEAALP…QLKTLFEQAK (76 aa)). Residue T432 is modified to Phosphothreonine. Position 448 is a phosphoserine (S448). The Zn(2+) site is built by C504, C507, C515, C518, C524, C528, H536, and C540. The MYND-type zinc-finger motif lies at 504–540 (CVNCGREAMSECTGCHKVNYCSTFCQRKDWKDHQHIC).

As to quaternary structure, homodimer. Isoform 1 and isoform 4 may form a heterodimer. Interacts with LMO2 and CLIM2. Interacts with LMO4; LMO4 blocks export from nucleus. May interact with the corepressors NCOR1 and NCRO2. Identified in a complex with the XRCC5 and XRCC6 heterodimer. Interacts (via the SAND domain) with the DNA-PK complex subunit XRCC6; the interaction is direct and may be inhibited by DNA-binding. May be phosphorylated by DNA-PK complex in a DNA independent manner (in vitro). As to expression, expressed in various tissues and cells such as in peripheral mononuclear cells and hormone-secreting pituitary cells. Expression in pancreatic lymph nodes of patients with type 1 diabetes is 20 times higher than in healthy controls. Highly expressed in fetal and adult brain.

It localises to the nucleus. The protein resides in the cytoplasm. It is found in the secreted. Transcription factor that binds to sequence with multiple copies of 5'-TTC[CG]G-3' present in its own promoter and that of the HNRPA2B1 gene. Down-regulates transcription of these genes. Binds to the retinoic acid response element (RARE) 5'-AGGGTTCACCGAAAGTTCA-3'. Activates the proenkephalin gene independently of promoter binding, probably through protein-protein interaction. When secreted, behaves as an inhibitor of cell proliferation, by arresting cells in the G0 or G1 phase. Required for neural tube closure and skeletal patterning. Regulates epithelial cell proliferation and side-branching in the mammary gland. Controls the expression of peripheral tissue antigens in pancreatic lymph nodes. Isoform 1 displays greater transcriptional activity than isoform 4. Isoform 4 may inhibit transcriptional activity of isoform 1 by interacting with isoform 1 and retaining it in the cytoplasm. Transcriptional activator of EIF4G3. This is Deformed epidermal autoregulatory factor 1 homolog (DEAF1) from Homo sapiens (Human).